The sequence spans 263 residues: tRNA dimethylallyltransferase (263 aa).

It belongs to the IPP transferase family. In terms of assembly, monomer. Mg(2+) serves as cofactor.

The enzyme catalyses adenosine(37) in tRNA + dimethylallyl diphosphate = N(6)-dimethylallyladenosine(37) in tRNA + diphosphate. Its function is as follows. Catalyzes the transfer of a dimethylallyl group onto the adenine at position 37 in tRNAs that read codons beginning with uridine, leading to the formation of N6-(dimethylallyl)adenosine (i(6)A). This Leifsonia xyli subsp. xyli (strain CTCB07) protein is tRNA dimethylallyltransferase.